A 389-amino-acid polypeptide reads, in one-letter code: Phospho-N-acetylmuramoyl-pentapeptide-transferase (389 aa).

10 helical membrane-spanning segments follow: residues 25–45, 73–93, 97–117, 134–154, 190–210, 222–242, 258–278, 286–306, 311–331, and 366–386; these read RAVMATVTALLIGLAAGPWVI, TMGGVLILIGIFISCILWADL, FIWIVMIVTFGFGLVGWVDDY, FFWQTLIGLFAAIYLAFSVSE, VSYPLGIMGFIILSYLVIVGS, GLVIMPVILVGAALGAFAYVM, GAGELMIFCGAMGGAGLAFLW, VFMGDVGALALGGALGTIAVI, IVLFVMGGIFVAETISVMLQV, and QVVVRFWIITILLVLIGLSSL.

The protein belongs to the glycosyltransferase 4 family. MraY subfamily. Requires Mg(2+) as cofactor.

The protein localises to the cell inner membrane. The enzyme catalyses UDP-N-acetyl-alpha-D-muramoyl-L-alanyl-gamma-D-glutamyl-meso-2,6-diaminopimeloyl-D-alanyl-D-alanine + di-trans,octa-cis-undecaprenyl phosphate = di-trans,octa-cis-undecaprenyl diphospho-N-acetyl-alpha-D-muramoyl-L-alanyl-D-glutamyl-meso-2,6-diaminopimeloyl-D-alanyl-D-alanine + UMP. Its pathway is cell wall biogenesis; peptidoglycan biosynthesis. In terms of biological role, catalyzes the initial step of the lipid cycle reactions in the biosynthesis of the cell wall peptidoglycan: transfers peptidoglycan precursor phospho-MurNAc-pentapeptide from UDP-MurNAc-pentapeptide onto the lipid carrier undecaprenyl phosphate, yielding undecaprenyl-pyrophosphoryl-MurNAc-pentapeptide, known as lipid I. The protein is Phospho-N-acetylmuramoyl-pentapeptide-transferase of Polynucleobacter necessarius subsp. necessarius (strain STIR1).